The following is a 187-amino-acid chain: Ribosome maturation factor RimM (187 aa).

Residues glutamate 96–glycine 169 enclose the PRC barrel domain.

It belongs to the RimM family. As to quaternary structure, binds ribosomal protein uS19.

It localises to the cytoplasm. Its function is as follows. An accessory protein needed during the final step in the assembly of 30S ribosomal subunit, possibly for assembly of the head region. Essential for efficient processing of 16S rRNA. May be needed both before and after RbfA during the maturation of 16S rRNA. It has affinity for free ribosomal 30S subunits but not for 70S ribosomes. The polypeptide is Ribosome maturation factor RimM (Sinorhizobium medicae (strain WSM419) (Ensifer medicae)).